The following is a 122-amino-acid chain: Flagellar protein FliT (122 aa).

The required for homodimerization stretch occupies residues 1–50 (MTSTVEFINRWQRIALLSQSLLELAQRGEWDLLLQQEVSYLQSIETVMEK). The segment at 60-98 (IQDMVAGYIKQTLDNEQLLKGLLQQRLDELSSLIGQSTR) is fliD binding.

It belongs to the FliT family. In terms of assembly, homodimer. Interacts with FliD and FlhC.

It localises to the cytoplasm. Its subcellular location is the cytosol. Dual-function protein that regulates the transcription of class 2 flagellar operons and that also acts as an export chaperone for the filament-capping protein FliD. As a transcriptional regulator, acts as an anti-FlhDC factor; it directly binds FlhC, thus inhibiting the binding of the FlhC/FlhD complex to class 2 promoters, resulting in decreased expression of class 2 flagellar operons. As a chaperone, effects FliD transition to the membrane by preventing its premature polymerization, and by directing it to the export apparatus. The sequence is that of Flagellar protein FliT from Salmonella gallinarum (strain 287/91 / NCTC 13346).